We begin with the raw amino-acid sequence, 119 residues long: Large ribosomal subunit protein bL20 (119 aa).

Belongs to the bacterial ribosomal protein bL20 family.

Functionally, binds directly to 23S ribosomal RNA and is necessary for the in vitro assembly process of the 50S ribosomal subunit. It is not involved in the protein synthesizing functions of that subunit. This Acinetobacter baylyi (strain ATCC 33305 / BD413 / ADP1) protein is Large ribosomal subunit protein bL20.